The sequence spans 121 residues: Flagellar hook-basal body complex protein FliE (121 aa).

Belongs to the FliE family.

It is found in the bacterial flagellum basal body. The sequence is that of Flagellar hook-basal body complex protein FliE from Treponema denticola (strain ATCC 35405 / DSM 14222 / CIP 103919 / JCM 8153 / KCTC 15104).